We begin with the raw amino-acid sequence, 366 residues long: GTP cyclohydrolase 1 type 2 homolog (366 aa).

The Zn(2+) site is built by H64, H65, D102, H326, and E329.

Belongs to the GTP cyclohydrolase I type 2/NIF3 family. In terms of assembly, homohexamer.

This chain is GTP cyclohydrolase 1 type 2 homolog, found in Staphylococcus aureus (strain COL).